We begin with the raw amino-acid sequence, 48 residues long: VEWTDAERGAILSLWGKIDPDELGPALLARXXLVYXXTQRYFASFGDL.

In terms of domain architecture, Globin spans 2 to 48; it reads EWTDAERGAILSLWGKIDPDELGPALLARXXLVYXXTQRYFASFGDL.

The protein belongs to the globin family. As to quaternary structure, heterotetramer of two alpha chains and two beta chains. Red blood cells.

Involved in oxygen transport from gills to the various peripheral tissues. The sequence is that of Hemoglobin subunit beta-B from Catostomus clarkii (Desert sucker).